The primary structure comprises 180 residues: O-acetyl-ADP-ribose deacetylase (180 aa).

In terms of domain architecture, Macro spans 1-175 (MKPQIDVIHG…LYQRLLTQRG (175 aa)). Residues 11 to 12 (DI), N25, 33 to 35 (GVD), and 122 to 126 (STGVY) contribute to the substrate site. Residue D35 is the Proton acceptor of the active site.

It belongs to the MacroD-type family. YmdB subfamily. As to quaternary structure, homodimer. Interacts with RNase III.

It carries out the reaction 3''-O-acetyl-ADP-D-ribose + H2O = ADP-D-ribose + acetate + H(+). The enzyme catalyses 2''-O-acetyl-ADP-D-ribose + H2O = ADP-D-ribose + acetate + H(+). Functionally, deacetylates O-acetyl-ADP ribose to yield ADP-ribose and free acetate. Down-regulates ribonuclease 3 (RNase III) activity. Acts by interacting directly with the region of the ribonuclease that is required for dimerization/activation. The sequence is that of O-acetyl-ADP-ribose deacetylase from Enterobacter cloacae subsp. cloacae (strain ATCC 13047 / DSM 30054 / NBRC 13535 / NCTC 10005 / WDCM 00083 / NCDC 279-56).